The sequence spans 448 residues: Trigger factor (448 aa).

Positions 167-253 (GSIVRVDFVE…LKDIKRRDIP (87 aa)) constitute a PPIase FKBP-type domain.

It belongs to the FKBP-type PPIase family. Tig subfamily.

It is found in the cytoplasm. The enzyme catalyses [protein]-peptidylproline (omega=180) = [protein]-peptidylproline (omega=0). Involved in protein export. Acts as a chaperone by maintaining the newly synthesized protein in an open conformation. Functions as a peptidyl-prolyl cis-trans isomerase. This chain is Trigger factor, found in Borrelia turicatae (strain 91E135).